A 213-amino-acid polypeptide reads, in one-letter code: Probable lipid phosphate phosphatase beta (213 aa).

Helical transmembrane passes span 30-50 (PFLPPFVLLLLEISADFRFSF), 67-87 (VPFLLGLLFDLIFVGIVKLIF), 118-138 (VFFVAASVHFFSAAAEASMTG), 158-178 (VEVVVVVWIWATVTAISRILL), and 181-201 (HYVLDVAAGAFLGIVEALFAL).

The protein belongs to the PA-phosphatase related phosphoesterase family.

The protein localises to the membrane. This chain is Probable lipid phosphate phosphatase beta (LPPB), found in Arabidopsis thaliana (Mouse-ear cress).